Here is a 286-residue protein sequence, read N- to C-terminus: uncharacterized protein (286 aa).

An HTH lysR-type domain is found at 1-58; the sequence is MLLEGIETLLVLSKEKTMSRTGSQLYISQSAVSKRIANLEKKLGKKLIVPAGRHIKLT. The segment at residues 18-37 is a DNA-binding region (H-T-H motif); it reads MSRTGSQLYISQSAVSKRIA.

This sequence belongs to the LysR transcriptional regulatory family.

This is an uncharacterized protein from Vibrio cholerae serotype O1 (strain ATCC 39315 / El Tor Inaba N16961).